The following is a 471-amino-acid chain: Siroheme synthase (471 aa).

The tract at residues 1–203 (MEYLPLFADL…GRLEQAEQAL (203 aa)) is precorrin-2 dehydrogenase /sirohydrochlorin ferrochelatase. Residues 22–23 (EV) and 43–44 (RA) each bind NAD(+). Residue S128 is modified to Phosphoserine. The interval 215 to 471 (GEVALVGAGP…QKRASVVNLA (257 aa)) is uroporphyrinogen-III C-methyltransferase. P224 lines the S-adenosyl-L-methionine pocket. D247 acts as the Proton acceptor in catalysis. K269 acts as the Proton donor in catalysis. S-adenosyl-L-methionine-binding positions include 300 to 302 (GGD), I305, 330 to 331 (TA), M382, and G411.

This sequence in the N-terminal section; belongs to the precorrin-2 dehydrogenase / sirohydrochlorin ferrochelatase family. It in the C-terminal section; belongs to the precorrin methyltransferase family.

The enzyme catalyses uroporphyrinogen III + 2 S-adenosyl-L-methionine = precorrin-2 + 2 S-adenosyl-L-homocysteine + H(+). The catalysed reaction is precorrin-2 + NAD(+) = sirohydrochlorin + NADH + 2 H(+). It carries out the reaction siroheme + 2 H(+) = sirohydrochlorin + Fe(2+). Its pathway is cofactor biosynthesis; adenosylcobalamin biosynthesis; precorrin-2 from uroporphyrinogen III: step 1/1. The protein operates within cofactor biosynthesis; adenosylcobalamin biosynthesis; sirohydrochlorin from precorrin-2: step 1/1. It participates in porphyrin-containing compound metabolism; siroheme biosynthesis; precorrin-2 from uroporphyrinogen III: step 1/1. It functions in the pathway porphyrin-containing compound metabolism; siroheme biosynthesis; siroheme from sirohydrochlorin: step 1/1. Its pathway is porphyrin-containing compound metabolism; siroheme biosynthesis; sirohydrochlorin from precorrin-2: step 1/1. In terms of biological role, multifunctional enzyme that catalyzes the SAM-dependent methylations of uroporphyrinogen III at position C-2 and C-7 to form precorrin-2 via precorrin-1. Then it catalyzes the NAD-dependent ring dehydrogenation of precorrin-2 to yield sirohydrochlorin. Finally, it catalyzes the ferrochelation of sirohydrochlorin to yield siroheme. The polypeptide is Siroheme synthase (Sodalis glossinidius (strain morsitans)).